A 105-amino-acid chain; its full sequence is Small ribosomal subunit protein uS10 (105 aa).

Belongs to the universal ribosomal protein uS10 family. As to quaternary structure, part of the 30S ribosomal subunit.

Functionally, involved in the binding of tRNA to the ribosomes. The polypeptide is Small ribosomal subunit protein uS10 (Francisella philomiragia subsp. philomiragia (strain ATCC 25017 / CCUG 19701 / FSC 153 / O#319-036)).